The following is a 198-amino-acid chain: dTTP/UTP pyrophosphatase (198 aa).

Residue Asp76 is the Proton acceptor of the active site.

The protein belongs to the Maf family. YhdE subfamily. It depends on a divalent metal cation as a cofactor.

Its subcellular location is the cytoplasm. The enzyme catalyses dTTP + H2O = dTMP + diphosphate + H(+). It carries out the reaction UTP + H2O = UMP + diphosphate + H(+). Its function is as follows. Nucleoside triphosphate pyrophosphatase that hydrolyzes dTTP and UTP. May have a dual role in cell division arrest and in preventing the incorporation of modified nucleotides into cellular nucleic acids. The chain is dTTP/UTP pyrophosphatase from Shewanella denitrificans (strain OS217 / ATCC BAA-1090 / DSM 15013).